We begin with the raw amino-acid sequence, 130 residues long: Small ribosomal subunit protein uS8 (130 aa).

Belongs to the universal ribosomal protein uS8 family. Part of the 30S ribosomal subunit. Contacts proteins S5 and S12.

One of the primary rRNA binding proteins, it binds directly to 16S rRNA central domain where it helps coordinate assembly of the platform of the 30S subunit. This Pseudomonas fluorescens (strain Pf0-1) protein is Small ribosomal subunit protein uS8.